We begin with the raw amino-acid sequence, 336 residues long: Fructose-1,6-bisphosphatase class 1 (336 aa).

Glu-90, Asp-112, Leu-114, and Asp-115 together coordinate Mg(2+). Residues 115 to 118, Asn-211, and Lys-277 each bind substrate; that span reads DGSS. Glu-283 is a Mg(2+) binding site.

This sequence belongs to the FBPase class 1 family. As to quaternary structure, homotetramer. Mg(2+) is required as a cofactor.

It localises to the cytoplasm. It catalyses the reaction beta-D-fructose 1,6-bisphosphate + H2O = beta-D-fructose 6-phosphate + phosphate. It functions in the pathway carbohydrate biosynthesis; gluconeogenesis. This is Fructose-1,6-bisphosphatase class 1 from Pseudomonas aeruginosa (strain UCBPP-PA14).